We begin with the raw amino-acid sequence, 229 residues long: MSSKQQWVSSAIQSDSSGRSLSNVNRLAGDQQSINDRALSLLQRTRATKNLFPRREERRRYESSKSDLDIETDYEDQAGNLEIETENEEEAEMETEVPAPVRTHSYALDRYVRQKRREKQRKQSLKRVEKKYTPSELALYEIRKYQRSTDLLISKIPFARLVKEVTDEFTTKDQDLRWQSMAIMALQEASEAYLVGLLEHTNLLALHAKRITIMKKDMQLARRIRGQFI.

Polar residues predominate over residues 1–35 (MSSKQQWVSSAIQSDSSGRSLSNVNRLAGDQQSIN). The tract at residues 1–78 (MSSKQQWVSS…DIETDYEDQA (78 aa)) is disordered. Basic and acidic residues predominate over residues 53–68 (PRREERRRYESSKSDL). A Nuclear localization signal motif is present at residues 115–132 (KRREKQRKQSLKRVEKKY). An H3-like region spans residues 132-229 (YTPSELALYE…LARRIRGQFI (98 aa)).

Belongs to the histone H3 family. As to quaternary structure, component of centromeric nucleosomes, where DNA is wrapped around a histone octamer core. The octamer contains two molecules each of H2A, H2B, CSE4/CENPA and H4 assembled in one CSE4-H4 heterotetramer and two H2A-H2B heterodimers. Interacts with the inner kinetochore. Interacts with the central kinetochore protein CTF19. Interacts with YTA7. Ubiquitinated. Is degraded through ubiquitin-mediated proteolysis when not protected by its association to the kinetochore.

The protein localises to the nucleus. It is found in the chromosome. Its subcellular location is the centromere. Histone H3-like nucleosomal protein that is specifically found in centromeric nucleosomes. Replaces conventional H3 in the nucleosome core of centromeric chromatin that serves as an assembly site for the inner kinetochore. Required for recruitment and assembly of kinetochore proteins, mitotic progression and chromosome segregation. May serve as an epigenetic mark that propagates centromere identity through replication and cell division. Required for functional chromatin architecture at the yeast 2-micron circle partitioning locus and promotes equal plasmid segregation. This Saccharomyces cerevisiae (strain ATCC 204508 / S288c) (Baker's yeast) protein is Histone H3-like centromeric protein CSE4 (CSE4).